We begin with the raw amino-acid sequence, 69 residues long: Large ribosomal subunit protein uL29 (69 aa).

It belongs to the universal ribosomal protein uL29 family.

The polypeptide is Large ribosomal subunit protein uL29 (Staphylococcus saprophyticus subsp. saprophyticus (strain ATCC 15305 / DSM 20229 / NCIMB 8711 / NCTC 7292 / S-41)).